We begin with the raw amino-acid sequence, 324 residues long: Probable pectinesterase A (324 aa).

The N-terminal stretch at 1-19 (MYLPSLVLGLLGFGLTAST) is a signal peptide. Asn-27 carries N-linked (GlcNAc...) asparagine glycosylation. Residue Gln-142 coordinates substrate. The Proton donor role is filled by Asp-165. Asp-186 (nucleophile) is an active-site residue. 2 residues coordinate substrate: Arg-246 and Trp-248.

It belongs to the pectinesterase family.

Its subcellular location is the secreted. The catalysed reaction is [(1-&gt;4)-alpha-D-galacturonosyl methyl ester](n) + n H2O = [(1-&gt;4)-alpha-D-galacturonosyl](n) + n methanol + n H(+). The protein operates within glycan metabolism; pectin degradation; 2-dehydro-3-deoxy-D-gluconate from pectin: step 1/5. In terms of biological role, involved in maceration and soft-rotting of plant tissue. The polypeptide is Probable pectinesterase A (pmeA) (Aspergillus fumigatus (strain CBS 144.89 / FGSC A1163 / CEA10) (Neosartorya fumigata)).